We begin with the raw amino-acid sequence, 157 residues long: Putative glutathione-dependent formaldehyde-activating enzyme (157 aa).

Residues 3–134 (LEGSCHCGAV…WVEIESREQD (132 aa)) form the CENP-V/GFA domain. Positions 7, 9, 27, 29, 32, 79, and 82 each coordinate Zn(2+).

Belongs to the Gfa family. It depends on Zn(2+) as a cofactor.

It carries out the reaction S-(hydroxymethyl)glutathione = glutathione + formaldehyde. It participates in one-carbon metabolism; formaldehyde degradation; formate from formaldehyde (glutathione route): step 1/3. Catalyzes the condensation of formaldehyde and glutathione to S-hydroxymethylglutathione. In Halomonas elongata (strain ATCC 33173 / DSM 2581 / NBRC 15536 / NCIMB 2198 / 1H9), this protein is Putative glutathione-dependent formaldehyde-activating enzyme.